A 521-amino-acid chain; its full sequence is GMP synthase [glutamine-hydrolyzing] (521 aa).

Positions 10-204 (SLLILDFGSQ…ALGICGCEND (195 aa)) constitute a Glutamine amidotransferase type-1 domain. Cys87 functions as the Nucleophile in the catalytic mechanism. Catalysis depends on residues His178 and Glu180. Residues 205 to 396 (WNMHNFAEEQ…LGMPREMLMR (192 aa)) form the GMPS ATP-PPase domain. An ATP-binding site is contributed by 232-238 (SGGVDSS).

Homodimer.

The catalysed reaction is XMP + L-glutamine + ATP + H2O = GMP + L-glutamate + AMP + diphosphate + 2 H(+). It functions in the pathway purine metabolism; GMP biosynthesis; GMP from XMP (L-Gln route): step 1/1. Functionally, catalyzes the synthesis of GMP from XMP. The sequence is that of GMP synthase [glutamine-hydrolyzing] from Wolinella succinogenes (strain ATCC 29543 / DSM 1740 / CCUG 13145 / JCM 31913 / LMG 7466 / NCTC 11488 / FDC 602W) (Vibrio succinogenes).